Reading from the N-terminus, the 36-residue chain is Egg-laying-like hormone (36 aa).

Lysine amide is present on Lys36.

As to expression, supra, subesophageal ganglia and segmental ganglia of the ventral nerve cord and brain.

Functionally, may be involved in leech reproduction. In Theromyzon tessulatum (Duck leech), this protein is Egg-laying-like hormone.